The sequence spans 74 residues: uncharacterized protein (74 aa).

The helical transmembrane segment at 54 to 72 (LIIPRFLLLIYSVIQCLFL) threads the bilayer.

It is found in the membrane. This is an uncharacterized protein from Saccharomyces cerevisiae (strain ATCC 204508 / S288c) (Baker's yeast).